We begin with the raw amino-acid sequence, 217 residues long: Probable GTP-binding protein EngB (217 aa).

The 174-residue stretch at 44–217 (DRVEVCFAGR…TLRSIIAHLE (174 aa)) folds into the EngB-type G domain. GTP contacts are provided by residues 52–59 (GRSNVGKS), 79–83 (GRTQE), 97–100 (DLPG), 164–167 (TKAD), and 198–200 (TSS). Mg(2+) contacts are provided by Ser59 and Thr81.

The protein belongs to the TRAFAC class TrmE-Era-EngA-EngB-Septin-like GTPase superfamily. EngB GTPase family. Mg(2+) serves as cofactor.

In terms of biological role, necessary for normal cell division and for the maintenance of normal septation. In Ruegeria pomeroyi (strain ATCC 700808 / DSM 15171 / DSS-3) (Silicibacter pomeroyi), this protein is Probable GTP-binding protein EngB.